The following is a 597-amino-acid chain: DNA mismatch repair protein MutL (597 aa).

This sequence belongs to the DNA mismatch repair MutL/HexB family.

Its function is as follows. This protein is involved in the repair of mismatches in DNA. It is required for dam-dependent methyl-directed DNA mismatch repair. May act as a 'molecular matchmaker', a protein that promotes the formation of a stable complex between two or more DNA-binding proteins in an ATP-dependent manner without itself being part of a final effector complex. The polypeptide is DNA mismatch repair protein MutL (Rhodopseudomonas palustris (strain BisB5)).